The chain runs to 358 residues: Acetylxylan esterase / glucomannan deacetylase (358 aa).

A signal peptide spans 1 to 18 (MKLLFPILLLTGSYFLSA). A lipid anchor (N-palmitoyl cysteine) is attached at Cys-19. Cys-19 carries the S-diacylglycerol cysteine lipid modification. The Nucleophile role is filled by Ser-160. Active-site charge relay system residues include Asp-333 and His-335.

Belongs to the carbohydrate esterase 2 (CE2) family.

The protein localises to the cell membrane. It catalyses the reaction Deacetylation of xylans and xylo-oligosaccharides.. It functions in the pathway glycan degradation; xylan degradation. In terms of biological role, involved in the degradation of plant cell wall polysaccharides. Catalyzes the deacetylation of acetylated birchwood xylan and glucomannan, with equal efficiency, and of the synthetic substrate 4-nitrophenyl acetate (4-NPAc). Does not bind cellulose, cellohexaose and beta-glucan. The protein is Acetylxylan esterase / glucomannan deacetylase of Cellvibrio japonicus (strain Ueda107) (Pseudomonas fluorescens subsp. cellulosa).